The following is a 95-amino-acid chain: UPF0358 protein BCG9842_B1188 (95 aa).

The protein belongs to the UPF0358 family.

The sequence is that of UPF0358 protein BCG9842_B1188 from Bacillus cereus (strain G9842).